Here is a 241-residue protein sequence, read N- to C-terminus: uncharacterized protein (241 aa).

Residues 19-53 (KRIGYGMGEKSSAGSSRDQTYSVKPASDVKDKKKV) form a disordered region. A compositionally biased stretch (polar residues) spans 30–39 (SAGSSRDQTY).

This is an uncharacterized protein from Ostreid herpesvirus 1 (isolate France) (OsHV-1).